A 245-amino-acid polypeptide reads, in one-letter code: MMKKRVKRVLFKISGEALSDGDSSNRISEERLSRLIAELKVVRNADVEVALVIGGGNILRGLSQSQSLQINRVSADQMGMLATLINGMALADALNTEDVPNLLTSTLSCPQLAELYNPQKASDALSQGKVVICTMGAGAPYLTTDTGAALRACELKVDILLKATMHVDGVYDQDPRECADAVRYDHISYRDFLSQGLGAIDPAAISLCMEAGIPIKMFSFARHSLEEAVFNTVGTVISSAEGGQL.

K12–G15 lines the ATP pocket. Residue G55 participates in UMP binding. Residues G56 and R60 each contribute to the ATP site. UMP-binding positions include D76 and A137–T144. T164, Y171, and D174 together coordinate ATP.

It belongs to the UMP kinase family. In terms of assembly, homohexamer.

The protein localises to the cytoplasm. It catalyses the reaction UMP + ATP = UDP + ADP. The protein operates within pyrimidine metabolism; CTP biosynthesis via de novo pathway; UDP from UMP (UMPK route): step 1/1. With respect to regulation, inhibited by UTP. Functionally, catalyzes the reversible phosphorylation of UMP to UDP. This is Uridylate kinase from Chlamydia trachomatis serovar A (strain ATCC VR-571B / DSM 19440 / HAR-13).